The chain runs to 980 residues: Putative helicase 087L (980 aa).

The Helicase ATP-binding domain occupies 59 to 246; sequence INPHTLYDGV…IDLFNLILRT (188 aa). 72-79 contributes to the ATP binding site; it reads HEMGTGKT. Residues 189–192 carry the DEAH box motif; it reads DEAH. Positions 389 to 546 constitute a Helicase C-terminal domain; it reads RLSFVFSEFV…SIDLHMYEIA (158 aa).

Belongs to the IIV-6 022L family. SNF2/RAD54 helicase subfamily.

The polypeptide is Putative helicase 087L (Invertebrate iridescent virus 3 (IIV-3)).